Consider the following 729-residue polypeptide: Serine/threonine-protein kinase TBK1 (729 aa).

The Protein kinase domain occupies 9-310 (WLLSDILGQG…ETSDILHRMV (302 aa)). Residue 15-23 (LGQGATANV) coordinates ATP. A Glycyl lysine isopeptide (Lys-Gly) (interchain with G-Cter in ubiquitin) cross-link involves residue lysine 30. Residue lysine 38 participates in ATP binding. Catalysis depends on aspartate 135, which acts as the Proton acceptor. Position 172 is a phosphoserine; by autocatalysis and IKKB (serine 172). Residues 309–385 (MVIHVFSLQQ…ENPIFVVSRE (77 aa)) form the Ubiquitin-like domain. Lysine 401 is covalently cross-linked (Glycyl lysine isopeptide (Lys-Gly) (interchain with G-Cter in ubiquitin)). Coiled coils occupy residues 407-657 (DLDG…LQET) and 658-713 (LPQK…ILER). At lysine 607 the chain carries N6-methyllysine; by SETD4. The interaction with AZI2, TANK and TBKBP1 stretch occupies residues 621 to 729 (RKMLHLRKQL…DGGLRNVDCL (109 aa)). Residue lysine 670 forms a Glycyl lysine isopeptide (Lys-Gly) (interchain with G-Cter in ubiquitin) linkage. A Phosphoserine modification is found at serine 716.

This sequence belongs to the protein kinase superfamily. Ser/Thr protein kinase family. I-kappa-B kinase subfamily. In terms of assembly, homodimer. Interacts with DDX3X, TIRAP and TRAF2. Part of a ternary complex consisting of TANK, TRAF2 and TBK1. Interacts with AZI2, TANK and TBKBP1; these interactions are mutually exclusive and mediate TBK1 activation. Interacts with GSK3B; this interaction promotes TBK1 self-association and autophosphorylation. Interacts with SIKE1; SIKE1 is associated with TBK1 under physiological condition and dissociated from TBK1 upon viral infection or TLR3 stimulation. Interacts with IRF3, leading to IRF3 phosphorylation. Interacts with RIGI. Interacts with CYLD. Interacts with OPTN and TRAF3. Interacts with SRC. Interacts with the exocyst complex subunit SEC5/EXOC2; this interaction is sufficient to trigger TBK1 activity. Interacts with STING1, leading to STING1 phosphorylation. Interacts with IFIT3 (via N-terminus). Interacts with MAVS; interaction only takes place in the presence of IFIT3 and leads to MAVS phosphorylation. Interacts (via protein kinase domain) with TTLL12 (via TTL domain); the interaction prevents MAVS binding to TBK1. Interacts with TICAM1; this interaction is enhanced in the presence of WDFY1 and leads to TICAM1 phosphorylation. Interacts with TRIM26. Interacts with TRIM23. Interacts with TTC4 and IKBKE. Interacts with HNRNPA2B1. Interacts with DDX3X. Interacts with TRIM14. Interacts with CEP170; efficient complex formation may be dependent on the presence of CCDC61. Interacts with TRAF3IP3. Interacts with HSP90AA1; the interaction mediates TBK1 association with TOMM70. Interacts with TAX1BP1. Interacts with kinase IKBKB; the complex interacts with STAT1, leading to phosphorylation of STAT1 on 'Thr-749' by IKBKB. Interacts with ICOS; this interaction is critical for the maturation of T follicular regulatory cells. Interacts with RNF144B; this interaction prevents TBK1 phosphorylation and subsequent activation. Interacts with ASB8; this interaction promotes TBK1 proteasomal degradation. Forms a ternary complex with ZNF268 and SETD4; the interaction with SETD4 is ZNF268-dependent and leads to TBK1 monomethylation, which enhances its interaction with IRF3 and MAVS. As to quaternary structure, (Microbial infection) Interacts with Borna disease virus (BDV) P protein leading to its phosphorylation. (Microbial infection) Interacts with Ebola virus protein VP35. In terms of assembly, (Microbial infection) Interacts with HCV NS3; this interaction leads to inhibition of cellular antiviral response by blocking necessary interactions between the TBK1 and its substrates IRF3 and IRF7. As to quaternary structure, (Microbial infection) Interacts with human herpesvirus 1 protein ICP34.5. (Microbial infection) Interacts with Zika virus non-structural protein 1/NS1 and non-structural protein 4B/NS4B. In terms of assembly, (Microbial infection) Interacts with SARS-CoV-2 non-structural protein 6; this interaction decreases IRF3 phosphorylation by 57%, which leads to reduced IFN-beta (IFNB) production. Interacts with SARS-CoV-2 helicase; this interaction inhibits TBK1 phosphorylation and decreases IRF3 phosphorylation by 75%, which leads to reduced IFN-beta production. Interacts with SARS-CoV-2 M protein; the interaction promotes TBK1 degradation via 'Lys-48'-linked ubiquitination. As to quaternary structure, (Microbial infection) Interacts with human cytomegalovirus protein UL35; this interaction inhibits type I interferon production. (Microbial infection) Interacts with heartland virus NSs; this interaction antagonizes TBK1 phosphorylation and inhibits TBK1-IRF3 interaction and thus the establishment of an antiviral state. In terms of assembly, (Microbial infection) Interacts (via N-terminus) with Severe fever with thrombocytopenia virus (SFTSV) NSs; this interaction antagonizes TBK1 phosphorylation and sequesters TBK1 in NSs-induced cytoplasmic inclusion bodies thereby inhibiting the IFN responses. Post-translationally, autophosphorylation at Ser-172 activates the kinase, and is an essential step for virus-triggered signaling. Phosphorylated by IKBKB/IKKB at Ser-172. Phosphorylation requires homodimerization and ubiquitination at Lys-30 and Lys-401. Dephosphorylated at Ser-172 by PPM1B and this negatively regulates its role in mediating antiviral response. 'Lys-63'-linked polyubiquitination by MIB1 after RNA virus infection, or by NRDP1 after LPS stimulation at Lys-30 and Lys-401, participates in kinase activation. 'Lys-48'-linked polyubiquitination at Lys-670 by DTX4 leads to proteasomal degradation. 'Lys-48'-linked polyubiquitination by TRAIP also leads to proteasomal degradation. 'Lys-48'-linked polyubiquitination by TRAF7; leading to proteasomal degradation. 'Lys-63'-linked polyubiquitination by RNF128 at Lys-30 and Lys-401 leads to the activation of antiviral responses. 'Lys-48'-linked polyubiquitination after 'lys-33'-linked deubiquitination by USP38 promotes TBK1 degradation. In terms of processing, (Microbial infection) Interaction with SARS-CoV-2 M protein induces 'Lys-48'-linked ubiquitination which leads to proteasomal degradation. Post-translationally, (Microbial infection) Deubiquitinated by Epstein-Barr virus BPLF1 on both 'Lys-48' and 'Lys-63'-linked ubiquitin chains; leading to inhibition of type I interfewron production. Monomethylation at Lys-607 by SETD4 maximizes TBK1 activation and promotes efficient interferon signaling. As to expression, ubiquitous with higher expression in testis. Expressed in the ganglion cells, nerve fiber layer and microvasculature of the retina.

It is found in the cytoplasm. The catalysed reaction is L-seryl-[protein] + ATP = O-phospho-L-seryl-[protein] + ADP + H(+). It carries out the reaction L-threonyl-[protein] + ATP = O-phospho-L-threonyl-[protein] + ADP + H(+). Serine/threonine kinase that plays an essential role in regulating inflammatory responses to foreign agents. Following activation of toll-like receptors by viral or bacterial components, associates with TRAF3 and TANK and phosphorylates interferon regulatory factors (IRFs) IRF3 and IRF7 as well as DDX3X. This activity allows subsequent homodimerization and nuclear translocation of the IRFs leading to transcriptional activation of pro-inflammatory and antiviral genes including IFNA and IFNB. In order to establish such an antiviral state, TBK1 form several different complexes whose composition depends on the type of cell and cellular stimuli. Plays a key role in IRF3 activation: acts by first phosphorylating innate adapter proteins MAVS, STING1 and TICAM1 on their pLxIS motif, leading to recruitment of IRF3, thereby licensing IRF3 for phosphorylation by TBK1. Phosphorylated IRF3 dissociates from the adapter proteins, dimerizes, and then enters the nucleus to induce expression of interferons. Thus, several scaffolding molecules including FADD, TRADD, MAVS, AZI2, TANK or TBKBP1/SINTBAD can be recruited to the TBK1-containing-complexes. Under particular conditions, functions as a NF-kappa-B effector by phosphorylating NF-kappa-B inhibitor alpha/NFKBIA, IKBKB or RELA to translocate NF-Kappa-B to the nucleus. Restricts bacterial proliferation by phosphorylating the autophagy receptor OPTN/Optineurin on 'Ser-177', thus enhancing LC3 binding affinity and antibacterial autophagy. Phosphorylates SMCR8 component of the C9orf72-SMCR8 complex, promoting autophagosome maturation. Phosphorylates ATG8 proteins MAP1LC3C and GABARAPL2, thereby preventing their delipidation and premature removal from nascent autophagosomes. Seems to play a role in energy balance regulation by sustaining a state of chronic, low-grade inflammation in obesity, which leads to a negative impact on insulin sensitivity. Attenuates retroviral budding by phosphorylating the endosomal sorting complex required for transport-I (ESCRT-I) subunit VPS37C. Phosphorylates Borna disease virus (BDV) P protein. Plays an essential role in the TLR3- and IFN-dependent control of herpes virus HSV-1 and HSV-2 infections in the central nervous system. Acts both as a positive and negative regulator of the mTORC1 complex, depending on the context: activates mTORC1 in response to growth factors by catalyzing phosphorylation of MTOR, while it limits the mTORC1 complex by promoting phosphorylation of RPTOR. Acts as a positive regulator of the mTORC2 complex by mediating phosphorylation of MTOR, leading to increased phosphorylation and activation of AKT1. Phosphorylates and activates AKT1. Involved in the regulation of TNF-induced RIPK1-mediated cell death, probably acting via CYLD phosphorylation that in turn controls RIPK1 ubiquitination status. Also participates in the differentiation of T follicular regulatory cells together with the receptor ICOS. The chain is Serine/threonine-protein kinase TBK1 from Homo sapiens (Human).